The following is a 542-amino-acid chain: CTP synthase (542 aa).

Residues 1–265 (MARYVFITGG…DSEILSAFGI (265 aa)) are amidoligase domain. S13 is a CTP binding site. S13 lines the UTP pocket. Position 14–19 (14–19 (SLGKGI)) interacts with ATP. Y54 serves as a coordination point for L-glutamine. D71 is a binding site for ATP. The Mg(2+) site is built by D71 and E139. CTP is bound by residues 146-148 (DIE), 186-191 (KTKPTQ), and K222. UTP-binding positions include 186-191 (KTKPTQ) and K222. A Glutamine amidotransferase type-1 domain is found at 291 to 541 (TIAIVGKYTG…IAATVEQSRL (251 aa)). L-glutamine is bound at residue A353. The active-site Nucleophile; for glutamine hydrolysis is C380. Residues 381 to 384 (FGMQ), E404, and R469 contribute to the L-glutamine site. Catalysis depends on residues H514 and E516.

The protein belongs to the CTP synthase family. As to quaternary structure, homotetramer.

It carries out the reaction UTP + L-glutamine + ATP + H2O = CTP + L-glutamate + ADP + phosphate + 2 H(+). The catalysed reaction is L-glutamine + H2O = L-glutamate + NH4(+). It catalyses the reaction UTP + NH4(+) + ATP = CTP + ADP + phosphate + 2 H(+). It participates in pyrimidine metabolism; CTP biosynthesis via de novo pathway; CTP from UDP: step 2/2. Its activity is regulated as follows. Allosterically activated by GTP, when glutamine is the substrate; GTP has no effect on the reaction when ammonia is the substrate. The allosteric effector GTP functions by stabilizing the protein conformation that binds the tetrahedral intermediate(s) formed during glutamine hydrolysis. Inhibited by the product CTP, via allosteric rather than competitive inhibition. Its function is as follows. Catalyzes the ATP-dependent amination of UTP to CTP with either L-glutamine or ammonia as the source of nitrogen. Regulates intracellular CTP levels through interactions with the four ribonucleotide triphosphates. The protein is CTP synthase of Bartonella bacilliformis (strain ATCC 35685 / KC583 / Herrer 020/F12,63).